A 218-amino-acid chain; its full sequence is 25.3 kDa vesicle transport protein SEC22-1 (218 aa).

The Cytoplasmic portion of the chain corresponds to 1–192; sequence MVKMTLIARV…DKAKDLNRQA (192 aa). The Longin domain occupies 6 to 120; it reads LIARVTDGLP…YAFIKFDTFI (115 aa). The 61-residue stretch at 135-195 folds into the v-SNARE coiled-coil homology domain; it reads NIAKLNDELY…KDLNRQALIR (61 aa). A helical; Anchor for type IV membrane protein membrane pass occupies residues 193–213; sequence LIRKWAPVAIVFGVVFLLFWV. Residues 214–218 lie on the Vesicular side of the membrane; sequence KNKLW.

This sequence belongs to the synaptobrevin family. In terms of assembly, interacts with SEC24A. Mainly expressed in flowers and siliques, to a lower extent in seedlings, and barely in roots and leaves.

Its subcellular location is the golgi apparatus membrane. The protein localises to the endoplasmic reticulum membrane. Functionally, V-SNARE involved in vesicle trafficking from the ER to the Golgi complex and required for early secretion. Involved in endoplasmic reticulum (ER) biogenesis and functions as well as for Golgi-stack integrity. Essential for gametophytes development. Involved in cesium Cs(+) accumulation, a non-essential cation. In Arabidopsis thaliana (Mouse-ear cress), this protein is 25.3 kDa vesicle transport protein SEC22-1.